Here is a 513-residue protein sequence, read N- to C-terminus: Zinc finger CCCH-type with G patch domain-containing protein (513 aa).

Position 1 is an N-acetylmethionine (Met-1). The tract at residues 90-131 (EVPVAPGAELETVPSRETGPGPTERGQEEDDGEDEEGGAALS) is disordered. Residues 116–126 (QEEDDGEDEEG) are compositionally biased toward acidic residues. The C3H1-type zinc finger occupies 176–202 (KSLKPCSFFLEGKCRFQENCRFSHGQV). A disordered region spans residues 267 to 296 (LPPLRTEPAGSSDSDGSDADDPSYARVVEP). 2 positions are modified to phosphoserine: Ser-278 and Ser-355. One can recognise a G-patch domain in the interval 315-361 (TRGIGSRLLAKMGYEFGKGLGRHAEGRVEPVHAVVLPRGKSLDQCAE). 2 disordered regions span residues 367–394 (TRAGQAGVSKPPKCRSRGSGPGGRPPPR) and 492–513 (AQEAGLQREQRKADTHKKMTEF). Residues 497–513 (LQREQRKADTHKKMTEF) are compositionally biased toward basic and acidic residues.

As to quaternary structure, interacts with CHD4/Mi-2; the interaction is direct.

It is found in the nucleus. Transcription repressor that specifically binds the 5'-GGAG[GA]A[GA]A-3' consensus sequence. Represses transcription by recruiting the chromatin multiprotein complex NuRD to target promoters. Negatively regulates expression of EGFR, a gene involved in cell proliferation, survival and migration. Its ability to repress genes of the EGFR pathway suggest it may act as a tumor suppressor. The sequence is that of Zinc finger CCCH-type with G patch domain-containing protein (ZGPAT) from Bos taurus (Bovine).